Here is a 345-residue protein sequence, read N- to C-terminus: Probable fructokinase-3 (345 aa).

The protein belongs to the carbohydrate kinase PfkB family.

The catalysed reaction is D-fructose + ATP = D-fructose 6-phosphate + ADP + H(+). The protein operates within glycan biosynthesis; starch biosynthesis. Functionally, may play an important role in maintaining the flux of carbon towards starch formation. The polypeptide is Probable fructokinase-3 (Arabidopsis thaliana (Mouse-ear cress)).